Reading from the N-terminus, the 244-residue chain is HTH-type transcriptional regulator Cmr (244 aa).

41 to 160 lines the a nucleoside 3',5'-cyclic phosphate pocket; sequence GSAPLHRDDV…RRWLSSVAQR (120 aa). The HTH crp-type domain occupies 174–237; that stretch reads RPLPAQVAQL…YAVIEITDQH (64 aa). Positions 197–216 form a DNA-binding region, H-T-H motif; sequence QRTLAAMLGAQRPSINKILK.

Positively regulates the expression of at least groEL2. This chain is HTH-type transcriptional regulator Cmr (cmr), found in Mycobacterium tuberculosis (strain CDC 1551 / Oshkosh).